Reading from the N-terminus, the 976-residue chain is Ubiquitin ligase-binding protein BUL1 (976 aa).

The tract at residues 1–65 (MAKDLNDSGF…SPSLHSPKSW (65 aa)) is disordered. Residues 23–39 (SDFTANSSTTMNVNANT) show a composition bias toward polar residues. The span at 53-64 (SSRSPSLHSPKS) shows a compositional bias: low complexity. A phosphoserine mark is found at Ser58 and Ser70. Disordered stretches follow at residues 82–124 (LAHS…DGDI), 145–196 (PQGN…SSST), and 857–878 (SEDSISHTGNGSSSSPSSASLT). Positions 156 to 160 (FPPSY) match the PY-motif motif. Over residues 163-176 (ANNSTATGAAGSSA) the composition is skewed to low complexity. Residues 177 to 196 (DLSHQSLSTDALGATRSSST) show a composition bias toward polar residues. Low complexity predominate over residues 862-878 (SHTGNGSSSSPSSASLT).

This sequence belongs to the BUL1 family. As to quaternary structure, component of the RSP5-BUL1/2 ubiquitin ligase complex composed of at least RSP5 and BUL1 or BUL2.

Its subcellular location is the cytoplasm. Its pathway is protein modification; protein ubiquitination. Component of a RSP5 ubiquitin ligase complex which specifies polyubiquitination and intracellular trafficking of the general amino acid permease GAP1 as well as other permeases such as PMA1. The RSP5-BUL1/2 complex is also necessary for the heat-shock element (HSE)-mediated gene expression, nitrogen starvation GLN3-dependent transcription and pressure-induced differential regulation of the 2 tryptophan permeases TAT1 and TAT2. This is Ubiquitin ligase-binding protein BUL1 (BUL1) from Saccharomyces cerevisiae (strain ATCC 204508 / S288c) (Baker's yeast).